The sequence spans 100 residues: Integration host factor subunit alpha (100 aa).

Belongs to the bacterial histone-like protein family. In terms of assembly, heterodimer of an alpha and a beta chain.

Functionally, this protein is one of the two subunits of integration host factor, a specific DNA-binding protein that functions in genetic recombination as well as in transcriptional and translational control. The protein is Integration host factor subunit alpha of Ruegeria pomeroyi (strain ATCC 700808 / DSM 15171 / DSS-3) (Silicibacter pomeroyi).